The primary structure comprises 101 residues: Thyrotropin subunit beta (101 aa).

4 disulfide bridges follow: Cys-2–Cys-88, Cys-10–Cys-66, Cys-14–Cys-68, and Cys-71–Cys-78. N-linked (GlcNAc...) asparagine glycosylation is present at Asn-6.

It belongs to the glycoprotein hormones subunit beta family. As to quaternary structure, heterodimer of a common alpha chain and a unique beta chain which confers biological specificity to thyrotropin, lutropin, follitropin and gonadotropin.

It localises to the secreted. Functionally, indispensable for the control of thyroid structure and metabolism. The polypeptide is Thyrotropin subunit beta (TSHB) (Phodopus sungorus (Striped hairy-footed hamster)).